The following is a 304-amino-acid chain: Glycine--tRNA ligase alpha subunit (304 aa).

It belongs to the class-II aminoacyl-tRNA synthetase family. Tetramer of two alpha and two beta subunits.

Its subcellular location is the cytoplasm. The enzyme catalyses tRNA(Gly) + glycine + ATP = glycyl-tRNA(Gly) + AMP + diphosphate. The sequence is that of Glycine--tRNA ligase alpha subunit from Tolumonas auensis (strain DSM 9187 / NBRC 110442 / TA 4).